The following is a 573-amino-acid chain: Plasmepsin X (573 aa).

A signal peptide spans 1–26; the sequence is MKRISPLNTLFYLSLFFSYTFKGLKC. A propeptide spanning residues 27–221 is cleaved from the precursor; that stretch reads TRIYKIGTKA…SSIEKNFIAL (195 aa). 2 disulfides stabilise this stretch: cysteine 39-cysteine 51 and cysteine 42-cysteine 48. Residues 167-211 are disordered; sequence KGNKNFTNNENNSDNENNSDNENNSDNENNLDNENNLDNENNSDN. Positions 183–203 are enriched in acidic residues; the sequence is NNSDNENNSDNENNLDNENNL. The 320-residue stretch at 248–567 folds into the Peptidase A1 domain; that stretch reads FVGELLVGTP…ESRPSMVGVA (320 aa). Residue aspartate 266 is part of the active site. Cysteine 279 and cysteine 284 are disulfide-bonded. Residue asparagine 334 is glycosylated (N-linked (GlcNAc...) asparagine). Cysteine 447 and cysteine 448 form a disulfide bridge. The active site involves aspartate 457. An intrachain disulfide couples cysteine 482 to cysteine 521.

Belongs to the peptidase A1 family. Autocleaved into a p16 prodomain form and two mature forms p44 and p51.

The protein localises to the cytoplasmic vesicle. It is found in the secretory vesicle. Inhibited by aminohydantoin compounds such as CWHM-117. Functionally, during the asexual blood stage, processes key proteins essential for merozoite egress and invasion of host erythrocytes. Cleaves and activates proteases SUB1 and SUB2. May process members of the EBL and Rh protein families. Also cleaves apical membrane protein AMA1. During the mosquito vector stage and probably in ookinetes, cleaves CelTOS. This chain is Plasmepsin X, found in Plasmodium falciparum (isolate NF54).